The primary structure comprises 230 residues: Large ribosomal subunit protein uL1 (230 aa).

This sequence belongs to the universal ribosomal protein uL1 family. As to quaternary structure, part of the 50S ribosomal subunit.

Functionally, binds directly to 23S rRNA. The L1 stalk is quite mobile in the ribosome, and is involved in E site tRNA release. Its function is as follows. Protein L1 is also a translational repressor protein, it controls the translation of the L11 operon by binding to its mRNA. In Leptospira borgpetersenii serovar Hardjo-bovis (strain JB197), this protein is Large ribosomal subunit protein uL1.